A 65-amino-acid chain; its full sequence is Muscarinic m1-toxin2 (65 aa).

Intrachain disulfides connect Cys3-Cys24, Cys17-Cys42, Cys46-Cys57, and Cys58-Cys63.

Belongs to the three-finger toxin family. Short-chain subfamily. Aminergic toxin sub-subfamily. As to quaternary structure, monomer. As to expression, expressed by the venom gland.

The protein localises to the secreted. Binds irreversibly and specifically to M1 (CHRM1) muscarinic acetylcholine receptors, blocking further binding of antagonists and preventing the action of agonists. This chain is Muscarinic m1-toxin2, found in Dendroaspis angusticeps (Eastern green mamba).